The sequence spans 206 residues: dCTP deaminase, dUMP-forming (206 aa).

DCTP contacts are provided by residues Arg-117–Arg-122, Asp-135, Thr-143–Glu-145, Gln-163, Tyr-177, Lys-184, and Gln-188. The active-site Proton donor/acceptor is the Glu-145.

This sequence belongs to the dCTP deaminase family. In terms of assembly, homotrimer.

It catalyses the reaction dCTP + 2 H2O = dUMP + NH4(+) + diphosphate. It participates in pyrimidine metabolism; dUMP biosynthesis; dUMP from dCTP: step 1/1. Bifunctional enzyme that catalyzes both the deamination of dCTP to dUTP and the hydrolysis of dUTP to dUMP without releasing the toxic dUTP intermediate. In Methanococcus maripaludis (strain C6 / ATCC BAA-1332), this protein is dCTP deaminase, dUMP-forming.